The primary structure comprises 78 residues: Beta-defensin 12 (78 aa).

A signal peptide spans 1-27 (MALSREVFYFGFALFFIVVELPSGSWA). Intrachain disulfides connect cysteine 46-cysteine 73, cysteine 53-cysteine 67, and cysteine 57-cysteine 74.

The protein belongs to the beta-defensin family. As to expression, only expressed in epididymis (caput, corpus and cauda).

It is found in the secreted. Its function is as follows. Has antibacterial activity. In Mus musculus (Mouse), this protein is Beta-defensin 12 (Defb12).